The chain runs to 156 residues: 6,7-dimethyl-8-ribityllumazine synthase (156 aa).

5-amino-6-(D-ribitylamino)uracil contacts are provided by residues Phe-23, 57-59, and 81-83; these read AYE and AII. (2S)-2-hydroxy-3-oxobutyl phosphate is bound at residue 86–87; the sequence is ST. The active-site Proton donor is the His-89. 5-amino-6-(D-ribitylamino)uracil is bound at residue Phe-114. Arg-128 lines the (2S)-2-hydroxy-3-oxobutyl phosphate pocket.

Belongs to the DMRL synthase family.

The enzyme catalyses (2S)-2-hydroxy-3-oxobutyl phosphate + 5-amino-6-(D-ribitylamino)uracil = 6,7-dimethyl-8-(1-D-ribityl)lumazine + phosphate + 2 H2O + H(+). It participates in cofactor biosynthesis; riboflavin biosynthesis; riboflavin from 2-hydroxy-3-oxobutyl phosphate and 5-amino-6-(D-ribitylamino)uracil: step 1/2. Catalyzes the formation of 6,7-dimethyl-8-ribityllumazine by condensation of 5-amino-6-(D-ribitylamino)uracil with 3,4-dihydroxy-2-butanone 4-phosphate. This is the penultimate step in the biosynthesis of riboflavin. The sequence is that of 6,7-dimethyl-8-ribityllumazine synthase from Campylobacter hominis (strain ATCC BAA-381 / DSM 21671 / CCUG 45161 / LMG 19568 / NCTC 13146 / CH001A).